We begin with the raw amino-acid sequence, 148 residues long: Cytochrome c-type biogenesis protein CcmE (148 aa).

At 1 to 7 (MTRKQRR) the chain is on the cytoplasmic side. Residues 8–28 (LYFVLLGMAALGGAVALVLTA) traverse the membrane as a helical; Signal-anchor for type II membrane protein segment. Residues 29-148 (ISDSLVYFYS…QWNDGKQPKQ (120 aa)) lie on the Periplasmic side of the membrane. Positions 121 and 125 each coordinate heme.

Belongs to the CcmE/CycJ family.

The protein resides in the cell inner membrane. In terms of biological role, heme chaperone required for the biogenesis of c-type cytochromes. Transiently binds heme delivered by CcmC and transfers the heme to apo-cytochromes in a process facilitated by CcmF and CcmH. The polypeptide is Cytochrome c-type biogenesis protein CcmE (Paramagnetospirillum magneticum (strain ATCC 700264 / AMB-1) (Magnetospirillum magneticum)).